The chain runs to 530 residues: UDP-glucuronosyltransferase 1A9 (530 aa).

The first 25 residues, 1–25, serve as a signal peptide directing secretion; that stretch reads MACTGWTSPLPLCVCLLLTCGFAEA. An N-linked (GlcNAc...) asparagine glycan is attached at asparagine 71. The residue at position 99 (lysine 99) is an N6-succinyllysine. N-linked (GlcNAc...) asparagine glycosylation is found at asparagine 292 and asparagine 344. The chain crosses the membrane as a helical span at residues 488–504; sequence VIGFLLAVVLTVAFITF.

This sequence belongs to the UDP-glycosyltransferase family. Homodimer. Homooligomer. Interacts with UGT1A1, UGT1A3, UGT1A4, UGT1A6, UGT1A7, UGT1A8 and UGT1A10 to form heterodimers. Isoform 1 interacts with isoform 2/i2 suggesting that oligomerization is involved in negative regulation of transferase activity by isoform 2. Isoform 1 also interacts with respective i2 isoforms of UGT1A1, UGT1A3, UGT1A4, UGT1A6, UGT1A7, UGT1A8 and UGT1A10. As to expression, expressed in liver, kidney, colon, esophagus and small intestine.

The protein resides in the endoplasmic reticulum membrane. It catalyses the reaction glucuronate acceptor + UDP-alpha-D-glucuronate = acceptor beta-D-glucuronoside + UDP + H(+). It carries out the reaction 2-hydroxy-17beta-estradiol + UDP-alpha-D-glucuronate = 2-hydroxy-17beta-estradiol 3-O-(beta-D-glucuronate) + UDP + H(+). The catalysed reaction is 4-hydroxy-17beta-estradiol + UDP-alpha-D-glucuronate = 17beta-estradiol 4-O-(beta-D-glucuronate) + UDP + H(+). The enzyme catalyses 2-hydroxyestrone + UDP-alpha-D-glucuronate = 2-hydroxyestrone 3-O-(beta-D-glucuronate) + UDP + H(+). It catalyses the reaction 4-hydroxyestrone + UDP-alpha-D-glucuronate = estrone 4-O-(beta-D-glucuronate) + UDP + H(+). It carries out the reaction prunetin + UDP-alpha-D-glucuronate = prunetin-5-O-beta-D-glucuronide + UDP. The catalysed reaction is 8-iso-prostaglandin F2alpha + UDP-alpha-D-glucuronate = 8-iso-prostaglandin F2alpha-glucuronide + UDP + H(+). The enzyme catalyses 5-epi-5-F2t-IsoP + UDP-alpha-D-glucuronate = 5-epi-5-F2t-IsoP-glucuronide + UDP + H(+). It catalyses the reaction (5Z,8Z,11Z,14Z)-eicosatetraenoate + UDP-alpha-D-glucuronate = O-[(5Z),(8Z),(11Z),(14Z)-eicosatetraenoyl]-beta-D-glucuronate + UDP. It carries out the reaction 15-hydroxy-(5Z,8Z,11Z,13E)-eicosatetraenoate + UDP-alpha-D-glucuronate = 15-O-(beta-D-glucuronosyl)-(5Z,8Z,11Z,14Z)-eicosatetraenoate + UDP + H(+). The catalysed reaction is prostaglandin B1 + UDP-alpha-D-glucuronate = 15-O-(beta-D-glucuronosyl)-prostaglandin B1 + UDP + H(+). The enzyme catalyses (E)-ferulate + UDP-alpha-D-glucuronate = (E)-4-O-(beta-D-glucuronosyl)-ferulate + UDP + H(+). It catalyses the reaction (E)-ferulate + UDP-alpha-D-glucuronate = (E)-ferulic acid beta-D-glucuronate ester + UDP. It carries out the reaction candesartan + UDP-alpha-D-glucuronate = candesartan O-beta-D-glucuronoside + UDP. The catalysed reaction is SN-38 + UDP-alpha-D-glucuronate = SN-38 O-beta-D-glucuronide + UDP + H(+). The enzyme catalyses mycophenolate + UDP-alpha-D-glucuronate = mycophenolate 7-O-beta-D-glucuronide + UDP + H(+). UDP-glucuronosyltransferase (UGT) that catalyzes phase II biotransformation reactions in which lipophilic substrates are conjugated with glucuronic acid to increase the metabolite's water solubility, thereby facilitating excretion into either the urine or bile. Essential for the elimination and detoxification of drugs, xenobiotics and endogenous compounds. Catalyzes the glucuronidation of endogenous estrogen hormones such as estradiol and estrone. Involved in the glucuronidation of arachidonic acid (AA) and AA-derived eicosanoids including 15-HETE, PGB1 and F2-isoprostanes (8-iso-PGF2alpha and 5-epi-5-F2t-IsoP). Glucuronates the phytochemical ferulic acid efficently at both the phenolic or the carboxylic acid group. Also catalyzes the glucuronidation of the isoflavones genistein, daidzein, glycitein, formononetin, biochanin A and prunetin, which are phytoestrogens with anticancer and cardiovascular properties. Involved in the glucuronidation of the AGTR1 angiotensin receptor antagonist caderastan, a drug which can inhibit the effect of angiotensin II. Involved in the biotransformation of 7-ethyl-10-hydroxycamptothecin (SN-38), the pharmacologically active metabolite of the anticancer drug irinotecan. Also metabolizes mycophenolate, an immunosuppressive agent. Its function is as follows. Lacks UGT glucuronidation activity but acts as a negative regulator of isoform 1. The polypeptide is UDP-glucuronosyltransferase 1A9 (Homo sapiens (Human)).